Consider the following 132-residue polypeptide: uncharacterized protein (132 aa).

The N-terminal stretch at 1–19 is a signal peptide; it reads MKKALFLVGLVFTAGVISS. A lipid anchor (N-palmitoyl cysteine) is attached at Cys20. Cys20 carries S-diacylglycerol cysteine lipidation.

The protein resides in the cell membrane. This is an uncharacterized protein from Aquifex aeolicus (strain VF5).